The chain runs to 197 residues: Probable GTP-binding protein EngB (197 aa).

The EngB-type G domain occupies Asn-22–Glu-195. GTP contacts are provided by residues Gly-30–Ser-37, Gly-57–Leu-61, Asp-75–Gly-78, Thr-142–Asp-145, and Phe-174–Ser-176. Positions 37 and 59 each coordinate Mg(2+).

The protein belongs to the TRAFAC class TrmE-Era-EngA-EngB-Septin-like GTPase superfamily. EngB GTPase family. Requires Mg(2+) as cofactor.

Its function is as follows. Necessary for normal cell division and for the maintenance of normal septation. This is Probable GTP-binding protein EngB from Clostridium perfringens (strain SM101 / Type A).